A 300-amino-acid chain; its full sequence is uncharacterized protein (300 aa).

This is an uncharacterized protein from Methanocaldococcus jannaschii (strain ATCC 43067 / DSM 2661 / JAL-1 / JCM 10045 / NBRC 100440) (Methanococcus jannaschii).